The following is a 579-amino-acid chain: MKDSIRHLIQQALDRLTADGVLPAGLTPAIQVENTKDKSHGDFASNIAMMLAKPAGMKPRDLAEKLIAALPADAGIAKVEIAGPGFLNFFQNSDALAQRLEAALADAQLGVHKNGPAQRVVVDLSAPNLAKEMHVGHLRSTIIGDGVARVLEFLGDTVIRQNHVGDWGTQFGMLLAYMQENPAAAESELADLEGFYRAAKKRFDESPEFADRARELVVQLQAGDAECLRLWHRFNDISLSHCQALYDRLGVKLSMADVKGESAYNDDLPQVVADLAAKGLLTEDNGAQCVFMDEFKNAEGNPLPLIVQKAGGGYLYATTDLAATRYRAGVLKADRVLYFVDQRQALHFQMVFACARLAGFVPASMELEHMGFGTMNGPDGRPFKTRDGGTVKLVQLLDEAEQRAYELVKSKNPELAEDELRRIARVVGIASVKYADLSKHRASDYSFNFDLMLSFEGNTAPYLLYAYTRVAGVFRKLGKGIDEIGGRIALVAEQEQALAAKLAQFGELLASVADKGTPHMLCSYLYDLAGLFSSFYENCPILAAEDEATRDSRLRLTALTGRTLKQGLELLGLETLERM.

Positions 127-137 (PNLAKEMHVGH) match the 'HIGH' region motif.

The protein belongs to the class-I aminoacyl-tRNA synthetase family. In terms of assembly, monomer.

The protein resides in the cytoplasm. The enzyme catalyses tRNA(Arg) + L-arginine + ATP = L-arginyl-tRNA(Arg) + AMP + diphosphate. This is Arginine--tRNA ligase from Ectopseudomonas mendocina (strain ymp) (Pseudomonas mendocina).